A 415-amino-acid polypeptide reads, in one-letter code: Serine--tRNA ligase (415 aa).

Residue 231–233 (TAE) coordinates L-serine. Position 262 to 264 (262 to 264 (RSE)) interacts with ATP. Glu-285 provides a ligand contact to L-serine. Residue 349–352 (EISS) participates in ATP binding. Ser-383 contacts L-serine.

It belongs to the class-II aminoacyl-tRNA synthetase family. Type-1 seryl-tRNA synthetase subfamily. In terms of assembly, homodimer. The tRNA molecule binds across the dimer.

The protein resides in the cytoplasm. It carries out the reaction tRNA(Ser) + L-serine + ATP = L-seryl-tRNA(Ser) + AMP + diphosphate + H(+). It catalyses the reaction tRNA(Sec) + L-serine + ATP = L-seryl-tRNA(Sec) + AMP + diphosphate + H(+). It participates in aminoacyl-tRNA biosynthesis; selenocysteinyl-tRNA(Sec) biosynthesis; L-seryl-tRNA(Sec) from L-serine and tRNA(Sec): step 1/1. Its function is as follows. Catalyzes the attachment of serine to tRNA(Ser). Is also able to aminoacylate tRNA(Sec) with serine, to form the misacylated tRNA L-seryl-tRNA(Sec), which will be further converted into selenocysteinyl-tRNA(Sec). The sequence is that of Serine--tRNA ligase from Helicobacter pylori (strain P12).